The sequence spans 637 residues: Chaperone protein DnaK (637 aa).

At Thr-198 the chain carries Phosphothreonine; by autocatalysis. The disordered stretch occupies residues 600–637; the sequence is IAQQQAQAQQAQGADAGAQSKDDDVVDAEFEEVKDDKK. A compositionally biased stretch (low complexity) spans 601–618; that stretch reads AQQQAQAQQAQGADAGAQ. Acidic residues predominate over residues 623 to 637; sequence DVVDAEFEEVKDDKK.

Belongs to the heat shock protein 70 family.

Acts as a chaperone. The protein is Chaperone protein DnaK of Vibrio parahaemolyticus serotype O3:K6 (strain RIMD 2210633).